We begin with the raw amino-acid sequence, 384 residues long: S-adenosylmethionine synthase (384 aa).

Residue histidine 15 participates in ATP binding. Aspartate 17 is a Mg(2+) binding site. Residue glutamate 43 participates in K(+) binding. Glutamate 56 and glutamine 99 together coordinate L-methionine. The interval 99 to 109 (QSADINQGVDR) is flexible loop. ATP contacts are provided by residues 164–166 (DAK), 230–231 (RF), aspartate 239, 245–246 (RK), alanine 262, and lysine 266. Aspartate 239 serves as a coordination point for L-methionine. Lysine 270 provides a ligand contact to L-methionine.

The protein belongs to the AdoMet synthase family. As to quaternary structure, homotetramer; dimer of dimers. Mg(2+) serves as cofactor. Requires K(+) as cofactor.

The protein localises to the cytoplasm. The catalysed reaction is L-methionine + ATP + H2O = S-adenosyl-L-methionine + phosphate + diphosphate. It participates in amino-acid biosynthesis; S-adenosyl-L-methionine biosynthesis; S-adenosyl-L-methionine from L-methionine: step 1/1. Its function is as follows. Catalyzes the formation of S-adenosylmethionine (AdoMet) from methionine and ATP. The overall synthetic reaction is composed of two sequential steps, AdoMet formation and the subsequent tripolyphosphate hydrolysis which occurs prior to release of AdoMet from the enzyme. The polypeptide is S-adenosylmethionine synthase (Haemophilus influenzae (strain PittEE)).